A 281-amino-acid polypeptide reads, in one-letter code: Leukocyte antigen CD37 (281 aa).

Residues 1 to 17 (MSAQESCLSLIKYFLFV) lie on the Cytoplasmic side of the membrane. The chain crosses the membrane as a helical span at residues 18–38 (FNLFFFVLGSLIFCFGIWILI). Topologically, residues 39–59 (DKTSFVSFVGLAFVPLQIWSK) are extracellular. A helical transmembrane segment spans residues 60 to 74 (VLAISGIFTMGIALL). Topologically, residues 75–85 (GCVGALKELRC) are cytoplasmic. Residues 86–111 (LLGLYFGMLLLLFATQITLGILISTQ) traverse the membrane as a helical segment. Residues 112–241 (RAQLERSLRD…QGLQKWLHNN (130 aa)) are Extracellular-facing. 3 N-linked (GlcNAc...) asparagine glycosylation sites follow: asparagine 170, asparagine 183, and asparagine 188. Residues 242-266 (LISIVGICLGVGLLELGFMTLSIFL) form a helical membrane-spanning segment. Residues 267–281 (CRNLDHVYNRLARYR) are Cytoplasmic-facing.

The protein belongs to the tetraspanin (TM4SF) family. Interacts with SCIMP. Interacts with SOCS3. Interacts with DECTIN1/CLEC7A. Tyrosine phosphorylated; leading to activation of downstream signaling pathways. B-lymphocytes. Antigen presenting cells.

It is found in the cell membrane. In terms of biological role, structural component of specialized membrane microdomains known as tetraspanin-enriched microdomains (TERMs), which act as platforms for receptor clustering and signaling. Participates thereby in diverse biological functions such as cell signal transduction, adhesion, migration and protein trafficking. Upon ligand binding, two signaling pathways are activated, one acting through phosphorylation by LYN leading to cell death or a survival pathway with activation of GSK3B. Plays an essential role essential for clustering of integrin ITGA4/ITGB1 and promotes its mobility in the plasma membrane of B-cells. In turn, participates in ITGA4/ITGB1 integrin-mediated antiapoptotic signaling through AKT. Also plays a role in the migration of dendritic cells and neutrophils to draining lymph nodes, as well as in their integrin-mediated adhesion. Negatively regulates IL-6 responses through direct interaction with SOCS3 thereby preventing constitutive IL-6 signaling. Alternatively, inhibition of IL-6 signaling can also occur via interaction and stabilization of DECTIN1/CLEC7A at the cell membrane to inhibit its ability to promote the production of IL-6. In Homo sapiens (Human), this protein is Leukocyte antigen CD37 (CD37).